A 163-amino-acid chain; its full sequence is Probable chemoreceptor glutamine deamidase CheD (163 aa).

The protein belongs to the CheD family.

It catalyses the reaction L-glutaminyl-[protein] + H2O = L-glutamyl-[protein] + NH4(+). Functionally, probably deamidates glutamine residues to glutamate on methyl-accepting chemotaxis receptors (MCPs), playing an important role in chemotaxis. The polypeptide is Probable chemoreceptor glutamine deamidase CheD (Borreliella afzelii (strain PKo) (Borrelia afzelii)).